The primary structure comprises 318 residues: MDDEGARKVDEKCPLCQADRYLNPNMKLLINPECYHKMCESCVDRIFTTGPAQCPTPGCNKILRKAKFREQTFEDAQIEREVDVRKRISRIFNKGQQEFDSLQAYNDYLEEVEILTFNLIYKIDVEETEEKVKQYEKQNRDSIAANSARAAAEARILAQNEILLKRQKQEAREAAIREHQKEKERREQVEQQIIFDLATSGKDPNKIIQLSDSLKKQQENIASSVSNISRSSSILLSDVQQVAEDTTPFSPLAGEKDGSKYFSYSKNTYQDLYLEKVSHEPGRKCGFRIEDCHLRCLYEAFSGIDYDLESLKKLEVAS.

An RING-type zinc finger spans residues 13–54 (CPLCQADRYLNPNMKLLINPECYHKMCESCVDRIFTTGPAQC).

In terms of assembly, one of the nine subunits forming the core-TFIIH basal transcription factor. Also interacts with skp1 and with the mcs2-mcs6 complex.

It localises to the cytoplasm. It is found in the nucleus. Its function is as follows. Acts as a component of the general transcription and DNA repair factor IIH (TFIIH or factor B), which is essential for both basal and activated transcription, and is involved in nucleotide excision repair (NER) of damaged DNA. TFIIH has CTD kinase activity and DNA-dependent ATPase activity, and is essential for polymerase II transcription. The chain is RNA polymerase II transcription factor B subunit 3 (pmh1) from Schizosaccharomyces pombe (strain 972 / ATCC 24843) (Fission yeast).